Consider the following 318-residue polypeptide: tRNA uridine(34) hydroxylase (318 aa).

Residues 125–219 (QDPNTVVIDA…YGTSKDTEGK (95 aa)) enclose the Rhodanese domain. Cysteine 179 acts as the Cysteine persulfide intermediate in catalysis.

This sequence belongs to the TrhO family.

It catalyses the reaction uridine(34) in tRNA + AH2 + O2 = 5-hydroxyuridine(34) in tRNA + A + H2O. In terms of biological role, catalyzes oxygen-dependent 5-hydroxyuridine (ho5U) modification at position 34 in tRNAs. The sequence is that of tRNA uridine(34) hydroxylase from Acholeplasma laidlawii (strain PG-8A).